Consider the following 453-residue polypeptide: Probable 1,4-beta-D-glucan cellobiohydrolase A (453 aa).

Residues 1–17 form the signal peptide; it reads MYQRALLFSALATAVSA. The active-site Nucleophile is the E226. Residue E231 is the Proton donor of the active site. N284 is a glycosylation site (N-linked (GlcNAc...) asparagine).

This sequence belongs to the glycosyl hydrolase 7 (cellulase C) family.

The protein localises to the secreted. It carries out the reaction Hydrolysis of (1-&gt;4)-beta-D-glucosidic linkages in cellulose and cellotetraose, releasing cellobiose from the non-reducing ends of the chains.. Its function is as follows. The biological conversion of cellulose to glucose generally requires three types of hydrolytic enzymes: (1) Endoglucanases which cut internal beta-1,4-glucosidic bonds; (2) Exocellobiohydrolases that cut the disaccharide cellobiose from the non-reducing end of the cellulose polymer chain; (3) Beta-1,4-glucosidases which hydrolyze the cellobiose and other short cello-oligosaccharides to glucose. The chain is Probable 1,4-beta-D-glucan cellobiohydrolase A (cbhA) from Aspergillus clavatus (strain ATCC 1007 / CBS 513.65 / DSM 816 / NCTC 3887 / NRRL 1 / QM 1276 / 107).